The sequence spans 149 residues: Large ribosomal subunit protein bL9 (149 aa).

It belongs to the bacterial ribosomal protein bL9 family.

Its function is as follows. Binds to the 23S rRNA. The polypeptide is Large ribosomal subunit protein bL9 (Salinibacter ruber (strain DSM 13855 / M31)).